A 254-amino-acid chain; its full sequence is HTH-type transcriptional repressor DasR (254 aa).

The HTH gntR-type domain occupies 17–87; the sequence is RTARVPKYYR…QGKGTFVAKP (71 aa). A DNA-binding region (H-T-H motif) is located at residues 47–66; sequence ERTLAAEFDTSRTTVRQALQ.

The protein resides in the cytoplasm. With respect to regulation, binding to the target genes is abolished by GlcN6P, a central molecule in N-acetylglucosamine metabolism. Global regulator that is part of the nutrient-sensing system. In the absence of glucosamine 6-P (GlcN6P), represses the phosphotransferase system (PTS) specific for the uptake of N-acetylglucosamine (PTSNag), and genes involved in the metabolism of chitin, as well as several genes involved in development, thereby linking carbon availability to morphogenesis. Also regulates the expression of the ABC transporters DasABC and NgcEFG, which are involved in N,N'-diacetylchitobiose ((GlcNAc)2) uptake. Binds to the DNA consensus sequence 5'-ACTGGTCTAGACCACT-3'. The sequence is that of HTH-type transcriptional repressor DasR (dasR) from Streptomyces coelicolor (strain ATCC BAA-471 / A3(2) / M145).